Reading from the N-terminus, the 513-residue chain is Cytochrome P450 705A1 (513 aa).

Residues 9–29 (QNCFIIILLCSFSLISYFVFF) form a helical membrane-spanning segment. Cys-448 contacts heme.

It belongs to the cytochrome P450 family. Heme serves as cofactor. As to expression, expressed in root stele, root cortex, root epidermis, root pericycle of the root hair zone, and quiescent center at the root meristematic zone.

The protein resides in the membrane. Functionally, cleaves the arabidiol side chain at C15 to form 14-apo-arabidiol and a side-chain fragment. Involved in the biosynthesis of the volatile homoterpene (E)-4,8-dimethyl-1,3,7-nonatriene (DMNT) in roots. Involved in the production of DMNT by degrading the triterpene arabidiol. May be involved in the defense again the fungal root pathogen Pythium irregulare by producing DMNT. The chain is Cytochrome P450 705A1 from Arabidopsis thaliana (Mouse-ear cress).